The chain runs to 69 residues: U2-agatoxin-Ao1g (69 aa).

Positions 1 to 20 (MKAIISLLLISAMVFSMIEA) are cleaved as a signal peptide. Residues 21–34 (VPVEEGLQLFEGER) constitute a propeptide that is removed on maturation. 3 disulfides stabilise this stretch: Cys36–Cys52, Cys43–Cys57, and Cys51–Cys67. Residue Leu68 is modified to Leucine amide.

It belongs to the neurotoxin 01 (U2-agtx) family. In terms of tissue distribution, expressed by the venom gland.

It is found in the secreted. Functionally, insect active toxin causing rapid but reversible paralysis in crickets. No activity shown in mammals. Does not show effect on mammalian voltage-gated calcium channels. In Agelena orientalis (Funnel-web spider), this protein is U2-agatoxin-Ao1g.